The following is a 244-amino-acid chain: Lymphotoxin-beta (244 aa).

Topologically, residues 1 to 18 are cytoplasmic; that stretch reads MGALGLEGRGGRLQGRGS. Residues 19–48 form a helical; Signal-anchor for type II membrane protein membrane-spanning segment; it reads LLLAVAGATSLVTLLLAVPITVLAVLALVP. Topologically, residues 49 to 244 are extracellular; the sequence is QDQGGLVTET…KTFFGAVMVG (196 aa). In terms of domain architecture, THD spans 88 to 243; that stretch reads PAAHLIGAPL…GKTFFGAVMV (156 aa). Asn-222 is a glycosylation site (N-linked (GlcNAc...) asparagine).

This sequence belongs to the tumor necrosis factor family. In terms of assembly, heterotrimer of either two LTB and one LTA subunits or (less prevalent) one LTB and two LTA subunits. Spleen and thymus.

Its subcellular location is the membrane. Cytokine that binds to LTBR/TNFRSF3. May play a specific role in immune response regulation. Provides the membrane anchor for the attachment of the heterotrimeric complex to the cell surface. Isoform 2 is probably non-functional. In Homo sapiens (Human), this protein is Lymphotoxin-beta (LTB).